The chain runs to 332 residues: Potassium channel subfamily K member 17 (332 aa).

The Cytoplasmic segment spans residues 1 to 20; sequence MYRPRARAAPEGRVRGCAVP. A helical membrane pass occupies residues 21 to 43; the sequence is STVLLLLAYLAYLALGTGVFWTL. Asn65 and Asn94 each carry an N-linked (GlcNAc...) asparagine glycan. The pore-forming intramembrane region spans 106-124; sequence SFFFSVSTITTIGYGNLSP. K(+) is bound by residues Thr116, Ile117, Gly118, and Tyr119. The selectivity filter 1 stretch occupies residues 116-121; sequence TIGYGN. The helical transmembrane segment at 128 to 148 threads the bilayer; sequence AARLFCIFFALVGIPLNLVVL. Residues 149–179 lie on the Cytoplasmic side of the membrane; it reads NRLGHLMQQGVNHWASRLGGTWQDPDKARWL. A helical transmembrane segment spans residues 180-200; sequence AGSGALLSGLLLFLLLPPLLF. Positions 211–230 form an intramembrane region, pore-forming; the sequence is GFYFAFITLSTVGFGDYVIG. Thr221, Val222, Gly223, and Phe224 together coordinate K(+). The segment at 221–226 is selectivity filter 2; sequence TVGFGD. A helical transmembrane segment spans residues 244–264; the sequence is MVSLWILFGMAWLALIIKLIL. Topologically, residues 265-332 are cytoplasmic; it reads SQLETPGRVC…AHAAGCGKDS (68 aa). The segment at 287–312 is disordered; that stretch reads SQSWRQGPDREPESHSPQQGCYPEGP.

This sequence belongs to the two pore domain potassium channel (TC 1.A.1.8) family. As to quaternary structure, homodimer; disulfide-linked. Heterodimer with KCNK5 and KCNK16. As to expression, widely expressed. Highly expressed in aorta and coronary artery. Expressed in pancreas, in both endocrine (alpha, beta, gamma, delta, and epsilon) and exocrine (acinar and ductal) cells.

The protein localises to the cell membrane. It catalyses the reaction K(+)(in) = K(+)(out). The enzyme catalyses Rb(+)(in) = Rb(+)(out). It carries out the reaction Cs(+)(in) = Cs(+)(out). Inhibited by Ba(2+), quinidine, chloroform and halothane. Activated at alkaline pH. Activated by quinine and isoflurane. Its function is as follows. K(+) channel that conducts voltage-dependent outward rectifying currents upon membrane depolarization. Voltage sensing is coupled to K(+) electrochemical gradient in an 'ion flux gating' mode where outward but not inward ion flow opens the gate. Homo- and heterodimerizes to form functional channels with distinct regulatory and gating properties. Present in the cardiac conduction system where it may regulate action potential duration and beating frequency of cardiac myocytes. Permeable to other monovalent cations such as Rb(+) and Cs(+). The chain is Potassium channel subfamily K member 17 from Homo sapiens (Human).